A 418-amino-acid polypeptide reads, in one-letter code: 26S proteasome regulatory subunit 6B (418 aa).

Met1 is subject to N-acetylmethionine. The residue at position 21 (Ser21) is a Phosphoserine. Residue Thr25 is modified to Phosphothreonine. A Phosphoserine modification is found at Ser28. Residue 206–213 coordinates ATP; sequence GPPGCGKT. N6-acetyllysine is present on residues Lys397 and Lys401.

It belongs to the AAA ATPase family. Component of the 19S proteasome regulatory particle complex. The 26S proteasome consists of a 20S core particle (CP) and two 19S regulatory subunits (RP). The regulatory particle is made of a lid composed of 9 subunits, a base containing 6 ATPases including PSMC4 and few additional components. Interacts with NR1I3. Interacts with PAAF1. Interacts with TRIM5. Interacts with ZFAND1.

It is found in the cytoplasm. It localises to the nucleus. Functionally, component of the 26S proteasome, a multiprotein complex involved in the ATP-dependent degradation of ubiquitinated proteins. This complex plays a key role in the maintenance of protein homeostasis by removing misfolded or damaged proteins, which could impair cellular functions, and by removing proteins whose functions are no longer required. Therefore, the proteasome participates in numerous cellular processes, including cell cycle progression, apoptosis, or DNA damage repair. PSMC4 belongs to the heterohexameric ring of AAA (ATPases associated with diverse cellular activities) proteins that unfolds ubiquitinated target proteins that are concurrently translocated into a proteolytic chamber and degraded into peptides. The sequence is that of 26S proteasome regulatory subunit 6B (PSMC4) from Bos taurus (Bovine).